Reading from the N-terminus, the 672-residue chain is UvrABC system protein B (672 aa).

A Helicase ATP-binding domain is found at 26 to 181 (AGLEDGLAYQ…ILQRLAELQY (156 aa)). 39-46 (GVTGSGKT) is an ATP binding site. The short motif at 92-115 (YYDYYQPEAYVPSSDTYIEKDASI) is the Beta-hairpin element. The Helicase C-terminal domain occupies 430–592 (QVDDLLSEIK…ITPKSIQKAV (163 aa)). Positions 631 to 666 (AKELRKLEEQMYHHARNLEFEEAAAVRDKIQHIRKG) constitute a UVR domain.

Belongs to the UvrB family. As to quaternary structure, forms a heterotetramer with UvrA during the search for lesions. Interacts with UvrC in an incision complex.

It localises to the cytoplasm. Functionally, the UvrABC repair system catalyzes the recognition and processing of DNA lesions. A damage recognition complex composed of 2 UvrA and 2 UvrB subunits scans DNA for abnormalities. Upon binding of the UvrA(2)B(2) complex to a putative damaged site, the DNA wraps around one UvrB monomer. DNA wrap is dependent on ATP binding by UvrB and probably causes local melting of the DNA helix, facilitating insertion of UvrB beta-hairpin between the DNA strands. Then UvrB probes one DNA strand for the presence of a lesion. If a lesion is found the UvrA subunits dissociate and the UvrB-DNA preincision complex is formed. This complex is subsequently bound by UvrC and the second UvrB is released. If no lesion is found, the DNA wraps around the other UvrB subunit that will check the other stand for damage. The sequence is that of UvrABC system protein B from Coxiella burnetii (strain Dugway 5J108-111).